A 238-amino-acid chain; its full sequence is Ribonuclease PH (238 aa).

Phosphate contacts are provided by residues Arg-86 and 124-126 (GTR).

It belongs to the RNase PH family. In terms of assembly, homohexameric ring arranged as a trimer of dimers.

It catalyses the reaction tRNA(n+1) + phosphate = tRNA(n) + a ribonucleoside 5'-diphosphate. Its function is as follows. Phosphorolytic 3'-5' exoribonuclease that plays an important role in tRNA 3'-end maturation. Removes nucleotide residues following the 3'-CCA terminus of tRNAs; can also add nucleotides to the ends of RNA molecules by using nucleoside diphosphates as substrates, but this may not be physiologically important. Probably plays a role in initiation of 16S rRNA degradation (leading to ribosome degradation) during starvation. The sequence is that of Ribonuclease PH from Haemophilus influenzae (strain 86-028NP).